A 353-amino-acid chain; its full sequence is Protein RecA (353 aa).

67–74 is an ATP binding site; it reads GPESSGKT.

It belongs to the RecA family.

The protein localises to the cytoplasm. Its function is as follows. Can catalyze the hydrolysis of ATP in the presence of single-stranded DNA, the ATP-dependent uptake of single-stranded DNA by duplex DNA, and the ATP-dependent hybridization of homologous single-stranded DNAs. It interacts with LexA causing its activation and leading to its autocatalytic cleavage. The chain is Protein RecA from Shewanella woodyi (strain ATCC 51908 / MS32).